We begin with the raw amino-acid sequence, 683 residues long: Long-chain fatty acid transport protein 3 (683 aa).

Residues 3–23 (ALLLLPLLLLLPLLLLKLHLW) traverse the membrane as a helical segment. The segment covering 119-128 (GGDSGEGSAG) has biased composition (gly residues). Residues 119–145 (GGDSGEGSAGEGERAAPGAGDAAAGSG) form a disordered region. The span at 133 to 145 (AAPGAGDAAAGSG) shows a compositional bias: low complexity. ATP-binding positions include 288-292 (TSGTT), histidine 331, threonine 428, aspartate 528, arginine 543, and lysine 635.

It belongs to the ATP-dependent AMP-binding enzyme family. In terms of tissue distribution, expressed in bronchial and bronchiolar epithelial cells (at protein level).

It localises to the mitochondrion membrane. The enzyme catalyses a fatty acid(in) = a fatty acid(out). It catalyses the reaction a long-chain fatty acid + ATP + CoA = a long-chain fatty acyl-CoA + AMP + diphosphate. It carries out the reaction hexadecanoate + ATP + CoA = hexadecanoyl-CoA + AMP + diphosphate. The catalysed reaction is (9Z)-octadecenoate + ATP + CoA = (9Z)-octadecenoyl-CoA + AMP + diphosphate. The enzyme catalyses (9Z,12Z)-octadecadienoate + ATP + CoA = (9Z,12Z)-octadecadienoyl-CoA + AMP + diphosphate. It catalyses the reaction (5Z,8Z,11Z,14Z)-eicosatetraenoate + ATP + CoA = (5Z,8Z,11Z,14Z)-eicosatetraenoyl-CoA + AMP + diphosphate. It carries out the reaction a very long-chain fatty acid + ATP + CoA = a very long-chain fatty acyl-CoA + AMP + diphosphate. The catalysed reaction is tetracosanoate + ATP + CoA = tetracosanoyl-CoA + AMP + diphosphate. Functionally, mainly functions as an acyl-CoA ligase catalyzing the ATP-dependent formation of fatty acyl-CoA using LCFA and very-long-chain fatty acids (VLCFA) as substrates. Can mediate the levels of long-chain fatty acids (LCFA) in the cell by facilitating their transport across membranes. This chain is Long-chain fatty acid transport protein 3, found in Homo sapiens (Human).